A 381-amino-acid chain; its full sequence is Alkanesulfonate monooxygenase (381 aa).

The protein belongs to the SsuD family. Homotetramer.

It catalyses the reaction an alkanesulfonate + FMNH2 + O2 = an aldehyde + FMN + sulfite + H2O + 2 H(+). Its function is as follows. Catalyzes the desulfonation of aliphatic sulfonates. The chain is Alkanesulfonate monooxygenase from Escherichia coli (strain SMS-3-5 / SECEC).